A 121-amino-acid chain; its full sequence is MDYRFGRQYRLLKTDDFSSVFAFRNRRSRDLLQVSRSNGNGLDHPRIGLVVGKKTAKRANERNYMKRVIRDWFRLNKNRLPPQDFVVRVRRKFDRATAKQARAELAQLMFGNPATGCGKQV.

It belongs to the RnpA family. Consists of a catalytic RNA component (M1 or rnpB) and a protein subunit.

The catalysed reaction is Endonucleolytic cleavage of RNA, removing 5'-extranucleotides from tRNA precursor.. RNaseP catalyzes the removal of the 5'-leader sequence from pre-tRNA to produce the mature 5'-terminus. It can also cleave other RNA substrates such as 4.5S RNA. The protein component plays an auxiliary but essential role in vivo by binding to the 5'-leader sequence and broadening the substrate specificity of the ribozyme. The protein is Ribonuclease P protein component of Neisseria gonorrhoeae (strain ATCC 700825 / FA 1090).